We begin with the raw amino-acid sequence, 995 residues long: MMNFLRRLLGDSNEKELRRLQPIVEEINRLGPEFAALSDAELRAKTDEFRQRLADGETLDDILPEAFATVREAAHRTIGLRHYDVQLIGGIVLHQGKIAEMKTGEGKTLVATLPLYLNALEGKGVHLVTVNDYLAKVGAGWMGPIYHFLGLTVGFIAHDQSALYDPDFIDPDANPEDQRLVHWRPCTRREAYLADITYGTNNEFGFDYLRDNMAYEKSQLVQRELHYAIVDEVDNILIDEARTPLIISGPAQKSSDLYRQMAQLVRQLRRSSVTAKQVKEEGLEPDGDFFVDERTKSIYLSEKGIEKLERLLRIPPGESLFDPEHYEKTHYIENALKAQFIYQRDRDYMVTPNGEVVIIDEFTGRAMPGRRWSDGLHQAVEAKEGVAIKNENVTLATITFQNYFRMYKKLAGMTGTAYTEREEFAKIYNLEVVVIPTHKPMIREDLPDQIYATEEAKFNAVLREVQEMHEIGRPVLIGTTSVETSERISAMLKRAGIPHNVLNAKHHEREAAIIAQAGRKGAVTVATNMAGRGTDILLGGNPDGLLEEFLRKEGLTIETATPEQKRAAWEKARAQTEAEGEEVRRLGGLHVIGTERHEARRIDNQLRGRAGRQGDPGSSRFFLSLEDELLRRFGPVDRIKGLMERFVDSDVPLQAGLLDRTIEGAQTRVEGYNFDVRKHTVEFDDVMNKQRQIIYADRKAILDEADMRERVLDLMAEEIQRQIDEHLIDGFEEEDLTNLLRAYRRINSTLPASVTAETLKGKTKEEIEQYLLDHLETTYAERERAVTPELMRTIERRVMLGAIDRQWVDYLTAMDELRQNILLQAYAQRDPLVEFKRESFRMFDELKQNIARDIVYNIIPATFQYEAYLRQIAEEQARRLATAQTVSSDGNGEVVRKPQRRSTPQIGRNELCPCGSGKKFKHCHLGREHELASLLNAQPSAPPASKALKSTPATQTAVAEEAAKIQAAINSGKLPPTQTTPRGRQAPSVPRGKKR.

ATP-binding positions include Q86, 104 to 108 (GEGKT), and D535. The tract at residues 883-911 (AQTVSSDGNGEVVRKPQRRSTPQIGRNEL) is disordered. Positions 912, 914, 923, and 924 each coordinate Zn(2+). The disordered stretch occupies residues 939–995 (PSAPPASKALKSTPATQTAVAEEAAKIQAAINSGKLPPTQTTPRGRQAPSVPRGKKR). Residues 957 to 969 (AVAEEAAKIQAAI) are compositionally biased toward low complexity.

It belongs to the SecA family. As to quaternary structure, monomer and homodimer. Part of the essential Sec protein translocation apparatus which comprises SecA, SecYEG and auxiliary proteins SecDF. Other proteins may also be involved. Requires Zn(2+) as cofactor.

The protein localises to the cell membrane. It localises to the cytoplasm. It carries out the reaction ATP + H2O + cellular proteinSide 1 = ADP + phosphate + cellular proteinSide 2.. In terms of biological role, part of the Sec protein translocase complex. Interacts with the SecYEG preprotein conducting channel. Has a central role in coupling the hydrolysis of ATP to the transfer of proteins into and across the cell membrane, serving as an ATP-driven molecular motor driving the stepwise translocation of polypeptide chains across the membrane. This Chloroflexus aurantiacus (strain ATCC 29366 / DSM 635 / J-10-fl) protein is Protein translocase subunit SecA.